The following is a 589-amino-acid chain: Serine/threonine-protein phosphatase 2A 65 kDa regulatory subunit A alpha isoform (589 aa).

Residue Ala2 is modified to N-acetylalanine. 15 HEAT repeats span residues 8-46 (DSLY…GVER), 47-84 (TRSE…GGPE), 85-123 (YVHC…SPSD), 124-161 (LEAH…VSSA), 162-200 (VKAE…ELDN), 201-239 (VKSE…PQED), 240-278 (LEAL…GPEI), 279-321 (TKTD…RENV), 322-360 (IMTQ…GKDN), 361-399 (TIEH…GIRQ), 400-438 (LSQS…GVEF), 439-477 (FDEK…GKEW), 478-516 (AHAT…GQDI), 517-555 (TTKH…DNST), and 556-589 (LQSE…LSLA). Lys280 bears the N6-acetyllysine mark.

This sequence belongs to the phosphatase 2A regulatory subunit A family. PP2A consists of a common heterodimeric core enzyme, composed of PPP2CA a 36 kDa catalytic subunit (subunit C) and PPP2R1A a 65 kDa constant regulatory subunit (PR65 or subunit A), that associates with a variety of regulatory subunits. Proteins that associate with the core dimer include three families of regulatory subunits B (the R2/B/PR55/B55, R3/B''/PR72/PR130/PR59 and R5/B'/B56 families), the 48 kDa variable regulatory subunit, viral proteins, and cell signaling molecules. Found in a complex with at least ARL2, PPP2CB, PPP2R1A, PPP2R2A, PPP2R5E and TBCD. Interacts with the PP2A C catalytic subunit PPP2CA. Interacts with the PP2A B subunit PPP2R2A. Interacts with the PP2A B subunit PPP2R5D. Interacts with FOXO1; the interaction dephosphorylates FOXO1 on AKT-mediated phosphorylation sites. Interacts with IPO9. Interacts with TP53 and SGO1. Interacts with PLA2G16; this interaction might decrease PP2A activity. Interacts with CTTNBP2NL. Interacts with GNA12; the interaction promotes protein phosphatase 2A activation causing dephosphorylation of MAPT. Interacts with CIP2A; this interaction stabilizes CIP2A. Interacts with PABIR1/FAM122A. Interacts with ADCY8; antagonizes interaction between ADCY8 and calmodulin. Interacts with CRTC3 (when phosphorylated at 'Ser-391'). Interacts with SPRY2. Part of the core of STRIPAK complexes composed of PP2A catalytic and scaffolding subunits, the striatins (PP2A regulatory subunits), the striatin-associated proteins MOB4, STRIP1 and STRIP2, PDCD10 and members of the STE20 kinases, such as STK24 and STK26. Component of the Integrator-PP2A (INTAC) complex, composed of the Integrator core complex and protein phosphatase 2A subunits PPP2CA and PPP2R1A.

It localises to the cytoplasm. It is found in the nucleus. Its subcellular location is the chromosome. The protein localises to the centromere. The protein resides in the lateral cell membrane. It localises to the cell projection. It is found in the dendrite. Its function is as follows. The PR65 subunit of protein phosphatase 2A serves as a scaffolding molecule to coordinate the assembly of the catalytic subunit and a variable regulatory B subunit. Upon interaction with GNA12 promotes dephosphorylation of microtubule associated protein TAU/MAPT. Required for proper chromosome segregation and for centromeric localization of SGO1 in mitosis. Together with RACK1 adapter, mediates dephosphorylation of AKT1 at 'Ser-473', preventing AKT1 activation and AKT-mTOR signaling pathway. Dephosphorylation of AKT1 is essential for regulatory T-cells (Treg) homeostasis and stability. Part of the striatin-interacting phosphatase and kinase (STRIPAK) complexes. STRIPAK complexes have critical roles in protein (de)phosphorylation and are regulators of multiple signaling pathways including Hippo, MAPK, nuclear receptor and cytoskeleton remodeling. Different types of STRIPAK complexes are involved in a variety of biological processes such as cell growth, differentiation, apoptosis, metabolism and immune regulation. Key mediator of a quality checkpoint during transcription elongation as part of the Integrator-PP2A (INTAC) complex. The INTAC complex drives premature transcription termination of transcripts that are unfavorably configured for transcriptional elongation: within the INTAC complex, acts as a scaffolding subunit for PPP2CA, which catalyzes dephosphorylation of the C-terminal domain (CTD) of Pol II subunit POLR2A/RPB1 and SUPT5H/SPT5, thereby preventing transcriptional elongation. Regulates the recruitment of the SKA complex to kinetochores. This is Serine/threonine-protein phosphatase 2A 65 kDa regulatory subunit A alpha isoform (Ppp2r1a) from Mus musculus (Mouse).